The sequence spans 297 residues: Protoheme IX farnesyltransferase 1 (297 aa).

Transmembrane regions (helical) follow at residues 23–43 (VVVL…RAGV), 45–65 (WSVL…AAAV), 93–113 (LPAL…LLMF), 117–137 (LTAW…TGFL), 145–165 (IVIG…AVSG), 171–191 (PLLL…ALAI), 216–236 (LHIL…YAIH), 241–261 (LYLV…WVLY), and 277–297 (IGYL…LLNL).

Belongs to the UbiA prenyltransferase family. Protoheme IX farnesyltransferase subfamily.

The protein localises to the cell inner membrane. It catalyses the reaction heme b + (2E,6E)-farnesyl diphosphate + H2O = Fe(II)-heme o + diphosphate. Its pathway is porphyrin-containing compound metabolism; heme O biosynthesis; heme O from protoheme: step 1/1. In terms of biological role, converts heme B (protoheme IX) to heme O by substitution of the vinyl group on carbon 2 of heme B porphyrin ring with a hydroxyethyl farnesyl side group. The chain is Protoheme IX farnesyltransferase 1 from Pseudomonas putida (strain W619).